The following is a 61-amino-acid chain: Translational regulator CsrA (61 aa).

This sequence belongs to the CsrA/RsmA family. Homodimer; the beta-strands of each monomer intercalate to form a hydrophobic core, while the alpha-helices form wings that extend away from the core.

It is found in the cytoplasm. In terms of biological role, a key translational regulator that binds mRNA to regulate translation initiation and/or mRNA stability. Mediates global changes in gene expression, shifting from rapid growth to stress survival by linking envelope stress, the stringent response and the catabolite repression systems. Usually binds in the 5'-UTR; binding at or near the Shine-Dalgarno sequence prevents ribosome-binding, repressing translation, binding elsewhere in the 5'-UTR can activate translation and/or stabilize the mRNA. Its function is antagonized by small RNA(s). This chain is Translational regulator CsrA, found in Actinobacillus succinogenes (strain ATCC 55618 / DSM 22257 / CCUG 43843 / 130Z).